Here is a 561-residue protein sequence, read N- to C-terminus: Dihydroxy-acid dehydratase 3 (561 aa).

Cys50 lines the [2Fe-2S] cluster pocket. Mg(2+) is bound at residue Asp82. Cys123 lines the [2Fe-2S] cluster pocket. 2 residues coordinate Mg(2+): Asp124 and Lys125. At Lys125 the chain carries N6-carboxylysine. A [2Fe-2S] cluster-binding site is contributed by Cys195. Mg(2+) is bound at residue Glu447. Residue Ser473 is the Proton acceptor of the active site.

The protein belongs to the IlvD/Edd family. Homodimer. Requires [2Fe-2S] cluster as cofactor. It depends on Mg(2+) as a cofactor.

The catalysed reaction is (2R)-2,3-dihydroxy-3-methylbutanoate = 3-methyl-2-oxobutanoate + H2O. It carries out the reaction (2R,3R)-2,3-dihydroxy-3-methylpentanoate = (S)-3-methyl-2-oxopentanoate + H2O. It functions in the pathway amino-acid biosynthesis; L-isoleucine biosynthesis; L-isoleucine from 2-oxobutanoate: step 3/4. The protein operates within amino-acid biosynthesis; L-valine biosynthesis; L-valine from pyruvate: step 3/4. Its function is as follows. Functions in the biosynthesis of branched-chain amino acids. Catalyzes the dehydration of (2R,3R)-2,3-dihydroxy-3-methylpentanoate (2,3-dihydroxy-3-methylvalerate) into 2-oxo-3-methylpentanoate (2-oxo-3-methylvalerate) and of (2R)-2,3-dihydroxy-3-methylbutanoate (2,3-dihydroxyisovalerate) into 2-oxo-3-methylbutanoate (2-oxoisovalerate), the penultimate precursor to L-isoleucine and L-valine, respectively. This chain is Dihydroxy-acid dehydratase 3, found in Bordetella bronchiseptica (strain ATCC BAA-588 / NCTC 13252 / RB50) (Alcaligenes bronchisepticus).